The following is a 339-amino-acid chain: Putative zinc metalloprotease CA_C1796 (339 aa).

Residue H20 coordinates Zn(2+). E21 is an active-site residue. A Zn(2+)-binding site is contributed by H24. A run of 3 helical transmembrane segments spans residues 91 to 113, 275 to 297, and 310 to 330; these read LSIV…CIVG, QLGV…LFLF, and VGFV…VVTI. One can recognise a PDZ domain in the interval 99 to 177; it reads IMNLILAAVL…GIKLALKNNG (79 aa).

It belongs to the peptidase M50B family. Zn(2+) is required as a cofactor.

It is found in the cell membrane. The polypeptide is Putative zinc metalloprotease CA_C1796 (Clostridium acetobutylicum (strain ATCC 824 / DSM 792 / JCM 1419 / IAM 19013 / LMG 5710 / NBRC 13948 / NRRL B-527 / VKM B-1787 / 2291 / W)).